The primary structure comprises 116 residues: U16-barytoxin-Tl1c (116 aa).

The signal sequence occupies residues 1-20 (MKTIIVFLSLLVLATKFGDA). A propeptide spanning residues 21 to 76 (NEGVNQEQMKEVIQNEFREDFLNEMAPMSLLQQLEAIESTLLEKEADRNSRQKRCN) is cleaved from the precursor. 3 cysteine pairs are disulfide-bonded: C75–C90, C82–C95, and C89–C110.

Belongs to the neurotoxin 14 (magi-1) family. 06 (ICK-Trit) subfamily. Expressed by the venom gland.

Its subcellular location is the secreted. Its function is as follows. Ion channel inhibitor. The polypeptide is U16-barytoxin-Tl1c (Trittame loki (Brush-footed trapdoor spider)).